Reading from the N-terminus, the 288-residue chain is Aminoglycoside N(3)-acetyltransferase VII (288 aa).

This sequence belongs to the antibiotic N-acetyltransferase family.

It carries out the reaction a 2-deoxystreptamine antibiotic + acetyl-CoA = an N(3)-acetyl-2-deoxystreptamine antibiotic + CoA + H(+). Resistance to paromomycin. In Streptomyces paromomycinus (Streptomyces rimosus subsp. paromomycinus), this protein is Aminoglycoside N(3)-acetyltransferase VII (aacC7).